The primary structure comprises 360 residues: UDP-N-acetylglucosamine--N-acetylmuramyl-(pentapeptide) pyrophosphoryl-undecaprenol N-acetylglucosamine transferase (360 aa).

Positions 198 and 289 each coordinate UDP-N-acetyl-alpha-D-glucosamine.

This sequence belongs to the glycosyltransferase 28 family. MurG subfamily.

Its subcellular location is the cell membrane. The enzyme catalyses Mur2Ac(oyl-L-Ala-gamma-D-Glu-L-Lys-D-Ala-D-Ala)-di-trans,octa-cis-undecaprenyl diphosphate + UDP-N-acetyl-alpha-D-glucosamine = beta-D-GlcNAc-(1-&gt;4)-Mur2Ac(oyl-L-Ala-gamma-D-Glu-L-Lys-D-Ala-D-Ala)-di-trans,octa-cis-undecaprenyl diphosphate + UDP + H(+). It participates in cell wall biogenesis; peptidoglycan biosynthesis. In terms of biological role, cell wall formation. Catalyzes the transfer of a GlcNAc subunit on undecaprenyl-pyrophosphoryl-MurNAc-pentapeptide (lipid intermediate I) to form undecaprenyl-pyrophosphoryl-MurNAc-(pentapeptide)GlcNAc (lipid intermediate II). The protein is UDP-N-acetylglucosamine--N-acetylmuramyl-(pentapeptide) pyrophosphoryl-undecaprenol N-acetylglucosamine transferase of Streptococcus pyogenes serotype M18 (strain MGAS8232).